The chain runs to 199 residues: Ribonuclease HII (199 aa).

The region spanning 10–199 (RIEAGCDEAG…LLPEQLTLGF (190 aa)) is the RNase H type-2 domain. Residues Asp16, Glu17, and Asp108 each coordinate a divalent metal cation.

It belongs to the RNase HII family. The cofactor is Mn(2+). Mg(2+) is required as a cofactor.

It is found in the cytoplasm. The catalysed reaction is Endonucleolytic cleavage to 5'-phosphomonoester.. Endonuclease that specifically degrades the RNA of RNA-DNA hybrids. This chain is Ribonuclease HII, found in Parabacteroides distasonis (strain ATCC 8503 / DSM 20701 / CIP 104284 / JCM 5825 / NCTC 11152).